The following is a 789-amino-acid chain: Tax1-binding protein 1 (789 aa).

3 positions are modified to phosphoserine: serine 124, serine 138, and serine 225. Residues 144-599 (TTKAGLLELK…LKRSLENPAE (456 aa)) are a coiled coil. The tract at residues 320–420 (EEIGRLQLCL…ELKLNAMKKD (101 aa)) is oligomerization. A compositionally biased stretch (polar residues) spans 481-502 (TGNQQKVNDASVNTDPATSAST). The tract at residues 481 to 508 (TGNQQKVNDASVNTDPATSASTVDVKPS) is disordered. Serine 593 is subject to Phosphoserine; by IKKA. Position 609 is a phosphoserine (serine 609). The segment at 639–660 (YASQETRDGADGAFYPDEIQRP) is disordered. At serine 666 the chain carries Phosphoserine; by IKKA. The segment at 678 to 712 (PARNFSRPDGLEDSEDSKEDENVPTAPDPPSQHLR) is disordered. UBZ1-type zinc fingers lie at residues 727–753 (HKKC…VESH) and 754–780 (WKVC…VQTH). 8 residues coordinate Zn(2+): cysteine 730, cysteine 733, histidine 749, histidine 753, cysteine 757, cysteine 760, histidine 776, and histidine 780.

In terms of assembly, homooligomer. Interacts with TNFAIP3. Interacts with STARD13. Interacts with MYO6. Interacts with TOM1; the interaction is indirect and is mediated by MYO6, which acts as a bridge between TOM1 and TAX1BP1. Interacts with MAVS; this interaction induces MAVS polyubiquitination. Interacts with TNIP1. Interacts with TRAF6; this interaction mediates deubiquitination of TRAF6 and inhibition of NF-kappa-B activation. Interacts with RIPK1; this interaction negatively regulates RIPK1 ubiquitination. Interacts with NBR1. Interacts with TBK1. Interacts with RB1CC1. Interacts with SQSTM1. Interacts with AZI2. Interacts with TICAM1 and TRIM32; these interactions target TICAM1 to TAX1BP1-mediated selective autophagic degradation. (Microbial infection) Interacts with the HTLV-1 protein Tax. As to quaternary structure, (Microbial infection) Interacts with Respiratory syncytial virus protein N; this interaction may promote viral growth by inhibiting the innate immune response. In terms of assembly, (Microbial infection) Interacts with Lassa virus protein Z. (Microbial infection) Interacts with Mopeia virus protein Z. Post-translationally, phosphorylated in the C-terminal region by CHUK/IKKA leading to NF-kappa-B signaling down-regulation. As to expression, expressed in all tissues tested.

It is found in the cytoplasm. It localises to the mitochondrion. The protein localises to the preautophagosomal structure. The protein resides in the cytoplasmic vesicle. Its subcellular location is the autophagosome. In terms of biological role, ubiquitin-binding adapter that participates in inflammatory, antiviral and innate immune processes as well as selective autophagy regulation. Plays a key role in the negative regulation of NF-kappa-B and IRF3 signalings by acting as an adapter for the ubiquitin-editing enzyme A20/TNFAIP3 to bind and inactivate its substrates. Disrupts the interactions between the E3 ubiquitin ligase TRAF3 and TBK1/IKBKE to attenuate 'Lys63'-linked polyubiquitination of TBK1 and thereby IFN-beta production. Also recruits A20/TNFAIP3 to ubiquitinated signaling proteins TRAF6 and RIPK1, leading to their deubiquitination and disruption of IL-1 and TNF-induced NF-kappa-B signaling pathways. Inhibits virus-induced apoptosis by inducing the 'Lys-48'-linked polyubiquitination and degradation of MAVS via recruitment of the E3 ligase ITCH, thereby attenuating MAVS-mediated apoptosis signaling. As a macroautophagy/autophagy receptor, facilitates the xenophagic clearance of pathogenic bacteria such as Salmonella typhimurium and Mycobacterium tuberculosis. Upon NBR1 recruitment to the SQSTM1-ubiquitin condensates, acts as the major recruiter of RB1CC1 to these ubiquitin condensates to promote their autophagic degradation. Mediates the autophagic degradation of other substrates including TICAM1. This Homo sapiens (Human) protein is Tax1-binding protein 1 (TAX1BP1).